The sequence spans 185 residues: MKTAQELRVGNVVMVGKDPLVVQKAEYNKSGRNAAVVKLKFKNLLTGSGSESVYKADEKFDVVVLDRKECTYSYFGDPMYVFMDEEYNQYEIEAESMGDALNYLEEAMPVEVVFYDGRAISVELPTILVREITYTEPAVRGDTSGKVLKPAKINTGFELNVPLFCAIGDKIEIDTRTNEYRSRVN.

The protein belongs to the elongation factor P family.

It is found in the cytoplasm. It participates in protein biosynthesis; polypeptide chain elongation. Involved in peptide bond synthesis. Stimulates efficient translation and peptide-bond synthesis on native or reconstituted 70S ribosomes in vitro. Probably functions indirectly by altering the affinity of the ribosome for aminoacyl-tRNA, thus increasing their reactivity as acceptors for peptidyl transferase. The protein is Elongation factor P of Bordetella petrii (strain ATCC BAA-461 / DSM 12804 / CCUG 43448).